The primary structure comprises 423 residues: 4-hydroxy-3-methylbut-2-en-1-yl diphosphate synthase (flavodoxin) (423 aa).

Residues cysteine 307, cysteine 310, cysteine 353, and glutamate 360 each coordinate [4Fe-4S] cluster.

This sequence belongs to the IspG family. [4Fe-4S] cluster serves as cofactor.

The enzyme catalyses (2E)-4-hydroxy-3-methylbut-2-enyl diphosphate + oxidized [flavodoxin] + H2O + 2 H(+) = 2-C-methyl-D-erythritol 2,4-cyclic diphosphate + reduced [flavodoxin]. It participates in isoprenoid biosynthesis; isopentenyl diphosphate biosynthesis via DXP pathway; isopentenyl diphosphate from 1-deoxy-D-xylulose 5-phosphate: step 5/6. In terms of biological role, converts 2C-methyl-D-erythritol 2,4-cyclodiphosphate (ME-2,4cPP) into 1-hydroxy-2-methyl-2-(E)-butenyl 4-diphosphate. The protein is 4-hydroxy-3-methylbut-2-en-1-yl diphosphate synthase (flavodoxin) of Brucella anthropi (strain ATCC 49188 / DSM 6882 / CCUG 24695 / JCM 21032 / LMG 3331 / NBRC 15819 / NCTC 12168 / Alc 37) (Ochrobactrum anthropi).